A 192-amino-acid polypeptide reads, in one-letter code: NADH:FMN oxidoreductase (192 aa).

The segment at 1–20 is disordered; sequence MSDKPNAVSSHTTPDVPEVA. FMN-binding positions include 60–63, 77–84, A111, and R117; these read TATS and NIAETSSS.

It belongs to the non-flavoprotein flavin reductase family.

It localises to the cytoplasm. It carries out the reaction FMNH2 + NAD(+) = FMN + NADH + 2 H(+). Its pathway is sulfur metabolism; dibenzothiophene degradation. Functionally, an NADH:FMN oxidoreductase which supplies reduced FMN for the '4S' desulfurization pathway that removes covalently bound sulfur from dibenzothiophene (DBT) without breaking carbon-carbon bonds. Provides DszA and DszC (DBTO2-monooxygenase and DBT-monooxygenase respectively) with reduced flavin (FMN). The polypeptide is NADH:FMN oxidoreductase (Rhodococcus erythropolis (Arthrobacter picolinophilus)).